The following is a 315-amino-acid chain: DNA-directed RNA polymerase subunit alpha (315 aa).

The tract at residues 1 to 228 is alpha N-terminal domain (alpha-NTD); the sequence is MIGMEKPKIE…EHLELFISLT (228 aa). The interval 245–315 is alpha C-terminal domain (alpha-CTD); sequence RNKLMEMTIE…FGLSLRQPDD (71 aa).

It belongs to the RNA polymerase alpha chain family. In terms of assembly, homodimer. The RNAP catalytic core consists of 2 alpha, 1 beta, 1 beta' and 1 omega subunit. When a sigma factor is associated with the core the holoenzyme is formed, which can initiate transcription.

The catalysed reaction is RNA(n) + a ribonucleoside 5'-triphosphate = RNA(n+1) + diphosphate. Functionally, DNA-dependent RNA polymerase catalyzes the transcription of DNA into RNA using the four ribonucleoside triphosphates as substrates. The sequence is that of DNA-directed RNA polymerase subunit alpha from Symbiobacterium thermophilum (strain DSM 24528 / JCM 14929 / IAM 14863 / T).